The primary structure comprises 500 residues: Centrosomal protein of 57 kDa (500 aa).

A compositionally biased stretch (low complexity) spans 1 to 16; that stretch reads MAAASVSAASDSQFSS. The tract at residues 1–59 is disordered; it reads MAAASVSAASDSQFSSVLAEPSRSNGNMVRHSSSPYVLYPPDKPFLNSDLRRSPNKPTF. Residues 22–35 show a composition bias toward polar residues; the sequence is SRSNGNMVRHSSSP. Serine 53 carries the post-translational modification Phosphoserine. A centrosome localization domain (CLD) region spans residues 58 to 239; that stretch reads TFAYPESNSR…RAAELQSGLE (182 aa). The stretch at 63–242 forms a coiled coil; sequence ESNSRAIFSA…ELQSGLEANR (180 aa). Disordered regions lie at residues 256–275 and 432–478; these read STRK…GSRT and QKKE…RKNL. The tract at residues 278–491 is mediates interaction with microtubules; sequence GAQPHYRLCL…KDMQTIQNSL (214 aa). Residues 389-449 adopt a coiled-coil conformation; that stretch reads TVELKDNLEC…KKTLDEEGNS (61 aa). Composition is skewed to basic and acidic residues over residues 432 to 444 and 461 to 475; these read QKKE…KTLD and SKKD…EKSR.

It belongs to the translokin family. In terms of assembly, interacts with FGF2 and RAP80. Does not interact with FGF1 or FGF2 isoform 24 kDa. Homodimer and homooligomer. Interacts with microtubules. Ubiquitous (at protein level). Expressed in testis, predominantly in round spermatids. Low expression is detected in other tissues.

It localises to the nucleus. Its subcellular location is the cytoplasm. The protein resides in the cytoskeleton. The protein localises to the microtubule organizing center. It is found in the centrosome. Its function is as follows. Centrosomal protein which may be required for microtubule attachment to centrosomes. May act by forming ring-like structures around microtubules. Mediates nuclear translocation and mitogenic activity of the internalized growth factor FGF2. This is Centrosomal protein of 57 kDa (Cep57) from Mus musculus (Mouse).